The following is a 580-amino-acid chain: Extracellular protease (580 aa).

A signal peptide spans 1 to 32 (MSTASLRKRTGSLTILGASALTSLLLAMPAFA). Positions 33–136 (GEVYLDGLAT…VEVDQILHAT (104 aa)) are excised as a propeptide. Residues 147–465 (QWAFGTTNAG…AGIVNADAAV (319 aa)) form the Peptidase S8 domain. Active-site charge relay system residues include D177 and H237. 2 disulfide bridges follow: C225-C273 and C315-C352. Residue S409 is the Charge relay system of the active site. Cysteines 450 and 454 form a disulfide.

The protein belongs to the peptidase S8 family.

The protein resides in the secreted. In Xanthomonas campestris pv. campestris (strain ATCC 33913 / DSM 3586 / NCPPB 528 / LMG 568 / P 25), this protein is Extracellular protease.